A 205-amino-acid chain; its full sequence is Proteasome subunit beta (205 aa).

The propeptide at 1–8 (MDDKQYKG) is removed in mature form; by autocatalysis. T9 functions as the Nucleophile in the catalytic mechanism.

Belongs to the peptidase T1B family. As to quaternary structure, the 20S proteasome core is composed of 14 alpha and 14 beta subunits that assemble into four stacked heptameric rings, resulting in a barrel-shaped structure. The two inner rings, each composed of seven catalytic beta subunits, are sandwiched by two outer rings, each composed of seven alpha subunits. The catalytic chamber with the active sites is on the inside of the barrel. Has a gated structure, the ends of the cylinder being occluded by the N-termini of the alpha-subunits. Is capped at one or both ends by the proteasome regulatory ATPase, PAN.

Its subcellular location is the cytoplasm. The catalysed reaction is Cleavage of peptide bonds with very broad specificity.. Its activity is regulated as follows. The formation of the proteasomal ATPase PAN-20S proteasome complex, via the docking of the C-termini of PAN into the intersubunit pockets in the alpha-rings, triggers opening of the gate for substrate entry. Interconversion between the open-gate and close-gate conformations leads to a dynamic regulation of the 20S proteasome proteolysis activity. Component of the proteasome core, a large protease complex with broad specificity involved in protein degradation. This Methanocella paludicola (strain DSM 17711 / JCM 13418 / NBRC 101707 / SANAE) protein is Proteasome subunit beta.